Reading from the N-terminus, the 448-residue chain is Nuclear distribution protein PAC1 (448 aa).

The region spanning 9–41 is the LisH domain; that stretch reads QAEELHKSIIAYLAANNFQDSVTAMRTELNLGE. The tract at residues 74–95 is disordered; it reads SATPTSLSNRKQDPASWLPAGP. 7 WD repeats span residues 102 to 143, 145 to 185, 189 to 236, 239 to 278, 283 to 343, 345 to 384, and 389 to 444; these read SHRT…RTVK, HTKA…KNIR, GHDH…CLKT, GHSDWIRDVSPSLDGKYLLSTGNDRTLRLWDISMNTPETK, GHEH…IKTL, GHDNWVRSLVFHPSGKFLLSVSDDKTIRCWDLSQEGKCVK, and MHEH…TSLR.

The protein belongs to the WD repeat LIS1/nudF family. Self-associates. Interacts with NDL1 and dynein.

The protein localises to the cytoplasm. It is found in the cytoskeleton. It localises to the spindle pole. Its function is as follows. Positively regulates the activity of the minus-end directed microtubule motor protein dynein. May enhance dynein-mediated microtubule sliding by targeting dynein to the microtubule plus end. Required for nuclear migration during vegetative growth as well as development. Required for retrograde early endosome (EE) transport from the hyphal tip. Required for localization of dynein to the mitotic spindle poles. Recruits additional proteins to the dynein complex at SPBs. The protein is Nuclear distribution protein PAC1 of Fusarium vanettenii (strain ATCC MYA-4622 / CBS 123669 / FGSC 9596 / NRRL 45880 / 77-13-4) (Fusarium solani subsp. pisi).